A 193-amino-acid chain; its full sequence is MLENLEKYKIILASNSPRRKELLSGLGIKYEVKTLPGIEETYPDTLKAEEIPLYIACEKAAAYRNTMHPDELIITADTIVWLDGVVMGKPHNEDDARQMLWKLSGKTHQVITGVCLTTVGAQRSFSAVTEVTFAELSDEEIDYYIRVYKPMDKAGSYGIQEWIGFIGVRGISGSYFNVMGLPVQRLYTELKKL.

Aspartate 77 (proton acceptor) is an active-site residue.

This sequence belongs to the Maf family. YhdE subfamily. A divalent metal cation is required as a cofactor.

Its subcellular location is the cytoplasm. The catalysed reaction is dTTP + H2O = dTMP + diphosphate + H(+). It catalyses the reaction UTP + H2O = UMP + diphosphate + H(+). Nucleoside triphosphate pyrophosphatase that hydrolyzes dTTP and UTP. May have a dual role in cell division arrest and in preventing the incorporation of modified nucleotides into cellular nucleic acids. This Phocaeicola vulgatus (strain ATCC 8482 / DSM 1447 / JCM 5826 / CCUG 4940 / NBRC 14291 / NCTC 11154) (Bacteroides vulgatus) protein is dTTP/UTP pyrophosphatase.